A 513-amino-acid chain; its full sequence is MSGCLPCFGSSAKDAASKDSVKKELSAKDGSVTQSHHISLDKSKSRRGPEQKKELTAPKEGPTAHIAAQTFTFRELAAATKNFRPECLLGEGGFGRVYKGRLETTGQIVAVKQLDRNGLQGNREFLVEVLMLSLLHHPNLVNLIGYCADGDQRLLVYEYMPLGSLEDHLHDLPPDKEPLDWSTRMTIAAGAAKGLEYLHDKANPPVIYRDLKSSNILLGDGYHPKLSDFGLAKLGPVGDKTHVSTRVMGTYGYCAPEYAMTGQLTLKSDVYSFGVVFLELITGRKAIDNARAPGEHNLVAWARPLFKDRRKFPKMADPSLQGRYPMRGLYQALAVAAMCLQEQAATRPLIGDVVTALTYLASQTFDPNAPSGQNSRSGSGPPFIRTRDDRRSLGDGSSLDSPAETRSRLGSPATHKNSPDYRRRDMVREVNAGSEGGSETGGGSGRKWGLSDLEGQESQRGSPASVGRSSRGTPRNRDLDRERAVAEAKVWGENWRERKRATNGPGSFDSTND.

Positions 1–61 (MSGCLPCFGS…KKELTAPKEG (61 aa)) are disordered. Residues C4 and C7 are each lipidated (S-palmitoyl cysteine). 2 stretches are compositionally biased toward basic and acidic residues: residues 15–27 (AASKDSVKKELSA) and 38–57 (ISLDKSKSRRGPEQKKELTA). Residues 83 to 360 (FRPECLLGEG…GDVVTALTYL (278 aa)) form the Protein kinase domain. ATP contacts are provided by residues 89–97 (LGEGGFGRV) and K112. D210 serves as the catalytic Proton acceptor. Phosphoserine; by CERK1 is present on S244. 2 positions are modified to phosphothreonine; by CERK1: T245 and T250. Over residues 365-378 (FDPNAPSGQNSRSG) the composition is skewed to polar residues. Residues 365–513 (FDPNAPSGQN…GPGSFDSTND (149 aa)) are disordered. Phosphoserine is present on residues S392 and S401. Residues 417–428 (NSPDYRRRDMVR) show a composition bias toward basic and acidic residues. Positions 434-446 (SEGGSETGGGSGR) are enriched in gly residues. Residues 456-473 (QESQRGSPASVGRSSRGT) show a composition bias toward polar residues. Over residues 475-486 (RNRDLDRERAVA) the composition is skewed to basic and acidic residues. Residues 504–513 (GPGSFDSTND) are compositionally biased toward polar residues.

It belongs to the protein kinase superfamily. Ser/Thr protein kinase family. As to quaternary structure, interacts with CERK1 (preferentially unphosphorylated) at the plasma membrane. Binds to MAPKKK5 at the plasma membrane; disassociation is induced by chitin perception by the CERK1 complex. Also associates with MAPKKK3. In terms of processing, phosphorylated by CERK1 upon elicitation by chitin. Palmitoylation at Cys-4 and Cys-7 are required for plasma membrane location.

It is found in the cell membrane. It catalyses the reaction L-seryl-[protein] + ATP = O-phospho-L-seryl-[protein] + ADP + H(+). It carries out the reaction L-threonyl-[protein] + ATP = O-phospho-L-threonyl-[protein] + ADP + H(+). Functionally, receptor-like cytoplasmic kinase involved in the transduction of signal between the host cell surface chitin receptor complex CERK1-LYK5 and the intracellular MAPKKK5-dependent mitogen-activated protein kinase (MAPK) cascade that leads to chitin-induced immunity. Phosphorylates and activates MAPKKK5 when phosphorylated by CERK1 after elicitation by chitin. This chain is Serine/threonine-protein kinase PBL27, found in Arabidopsis thaliana (Mouse-ear cress).